Reading from the N-terminus, the 222-residue chain is (4-{4-[2-(gamma-L-glutamylamino)ethyl]phenoxymethyl}furan-2-yl)methanamine synthase (222 aa).

Belongs to the MfnF family.

The enzyme catalyses gamma-L-glutamyltyramine + [5-(aminomethyl)furan-3-yl]methyl diphosphate = (4-{4-[2-(gamma-L-glutamylamino)ethyl]phenoxymethyl}furan-2-yl)methanamine + diphosphate. The protein operates within cofactor biosynthesis; methanofuran biosynthesis. Its function is as follows. Catalyzes the condensation between 5-(aminomethyl)-3-furanmethanol diphosphate (F1-PP) and gamma-glutamyltyramine to produce APMF-Glu. The protein is (4-{4-[2-(gamma-L-glutamylamino)ethyl]phenoxymethyl}furan-2-yl)methanamine synthase of Methanococcus vannielii.